A 292-amino-acid chain; its full sequence is Acetyl-coenzyme A carboxylase carboxyl transferase subunit beta (292 aa).

Positions 35–292 (VFSQCEQCNS…LKLHAKKVTS (258 aa)) constitute a CoA carboxyltransferase N-terminal domain. 4 residues coordinate Zn(2+): cysteine 39, cysteine 42, cysteine 58, and cysteine 61. The C4-type zinc-finger motif lies at 39–61 (CEQCNSAIYNKDLEHNYEVCPYC).

The protein belongs to the AccD/PCCB family. Acetyl-CoA carboxylase is a heterohexamer composed of biotin carboxyl carrier protein (AccB), biotin carboxylase (AccC) and two subunits each of ACCase subunit alpha (AccA) and ACCase subunit beta (AccD). It depends on Zn(2+) as a cofactor.

It localises to the cytoplasm. It catalyses the reaction N(6)-carboxybiotinyl-L-lysyl-[protein] + acetyl-CoA = N(6)-biotinyl-L-lysyl-[protein] + malonyl-CoA. It participates in lipid metabolism; malonyl-CoA biosynthesis; malonyl-CoA from acetyl-CoA: step 1/1. Component of the acetyl coenzyme A carboxylase (ACC) complex. Biotin carboxylase (BC) catalyzes the carboxylation of biotin on its carrier protein (BCCP) and then the CO(2) group is transferred by the transcarboxylase to acetyl-CoA to form malonyl-CoA. The chain is Acetyl-coenzyme A carboxylase carboxyl transferase subunit beta from Acholeplasma laidlawii (strain PG-8A).